The primary structure comprises 122 residues: MIQQESQLKVADNTGAKKVKCFKVLGGSRRRYATVGDVIVCSVRDVEPDSSVKKGDVVKAVIVRTRNDIRRKDGSTLRFDTNSCVIIDDKGNPKGTRIFGPVAREIRDRGFIKISSLAPEVI.

This sequence belongs to the universal ribosomal protein uL14 family. In terms of assembly, part of the 50S ribosomal subunit. Forms a cluster with proteins L3 and L19. In the 70S ribosome, L14 and L19 interact and together make contacts with the 16S rRNA in bridges B5 and B8.

Functionally, binds to 23S rRNA. Forms part of two intersubunit bridges in the 70S ribosome. This Chlamydia muridarum (strain MoPn / Nigg) protein is Large ribosomal subunit protein uL14.